The following is a 778-amino-acid chain: Endonuclease MutS2 (778 aa).

Residue 328-335 coordinates ATP; it reads GPNTGGKT. In terms of domain architecture, Smr spans 702 to 777; the sequence is LDLRGKRYEE…GSGATIVTFK (76 aa).

The protein belongs to the DNA mismatch repair MutS family. MutS2 subfamily. Homodimer. Binds to stalled ribosomes, contacting rRNA.

Functionally, endonuclease that is involved in the suppression of homologous recombination and thus may have a key role in the control of bacterial genetic diversity. Acts as a ribosome collision sensor, splitting the ribosome into its 2 subunits. Detects stalled/collided 70S ribosomes which it binds and splits by an ATP-hydrolysis driven conformational change. Acts upstream of the ribosome quality control system (RQC), a ribosome-associated complex that mediates the extraction of incompletely synthesized nascent chains from stalled ribosomes and their subsequent degradation. Probably generates substrates for RQC. This Streptococcus pneumoniae (strain Taiwan19F-14) protein is Endonuclease MutS2.